A 250-amino-acid chain; its full sequence is Shieldin complex subunit 3 (250 aa).

The interval Q28–S83 is sufficient for interaction with MAD2L2. Residues L108–K119 show a composition bias toward polar residues. The tract at residues L108–R129 is disordered.

Component of the shieldin complex, consisting of SHLD1, SHLD2, SHLD3 and MAD2L2/REV7. Within the complex, SHLD2 forms a scaffold which interacts with a SHLD3-MAD2L2 subcomplex via its N-terminus, and with SHLD1 via its C-terminus. Interacts with ASTE1.

It is found in the chromosome. Its function is as follows. Component of the shieldin complex, which plays an important role in repair of DNA double-stranded breaks (DSBs). During G1 and S phase of the cell cycle, the complex functions downstream of TP53BP1 to promote non-homologous end joining (NHEJ) and suppress DNA end resection. Mediates various NHEJ-dependent processes including immunoglobulin class-switch recombination, and fusion of unprotected telomeres. In Homo sapiens (Human), this protein is Shieldin complex subunit 3.